The sequence spans 545 residues: CTP synthase (545 aa).

Residues 1–266 (MTTKYIFVTG…DEICVKRFGL (266 aa)) are amidoligase domain. Residue serine 14 participates in CTP binding. Serine 14 lines the UTP pocket. Residues 15 to 20 (SLGKGI) and aspartate 72 each bind ATP. Positions 72 and 140 each coordinate Mg(2+). Residues 147–149 (DIE), 187–192 (KTKPTQ), and lysine 223 contribute to the CTP site. Residues 187–192 (KTKPTQ) and lysine 223 each bind UTP. 239-241 (RDV) contributes to the ATP binding site. The Glutamine amidotransferase type-1 domain maps to 291 to 542 (IIGMVGKYTE…IKSAIDHQQG (252 aa)). Position 352 (glycine 352) interacts with L-glutamine. Residue cysteine 379 is the Nucleophile; for glutamine hydrolysis of the active site. Residues 380-383 (LGMQ), glutamate 403, and arginine 470 contribute to the L-glutamine site. Active-site residues include histidine 515 and glutamate 517.

This sequence belongs to the CTP synthase family. As to quaternary structure, homotetramer.

It catalyses the reaction UTP + L-glutamine + ATP + H2O = CTP + L-glutamate + ADP + phosphate + 2 H(+). It carries out the reaction L-glutamine + H2O = L-glutamate + NH4(+). The enzyme catalyses UTP + NH4(+) + ATP = CTP + ADP + phosphate + 2 H(+). It functions in the pathway pyrimidine metabolism; CTP biosynthesis via de novo pathway; CTP from UDP: step 2/2. Allosterically activated by GTP, when glutamine is the substrate; GTP has no effect on the reaction when ammonia is the substrate. The allosteric effector GTP functions by stabilizing the protein conformation that binds the tetrahedral intermediate(s) formed during glutamine hydrolysis. Inhibited by the product CTP, via allosteric rather than competitive inhibition. Its function is as follows. Catalyzes the ATP-dependent amination of UTP to CTP with either L-glutamine or ammonia as the source of nitrogen. Regulates intracellular CTP levels through interactions with the four ribonucleotide triphosphates. In Psychromonas ingrahamii (strain DSM 17664 / CCUG 51855 / 37), this protein is CTP synthase.